The chain runs to 375 residues: PTS system fructose-specific EIIC component (375 aa).

Positions 16–370 constitute a PTS EIIC type-2 domain; it reads VKEDLMTGVS…KPNFDAKMAA (355 aa). Helical transmembrane passes span 24–44, 68–88, 93–113, 122–142, 160–180, 203–223, 238–258, 279–299, 301–321, and 340–360; these read VSFM…GYAV, IGVA…AYAI, GLAP…LQAA, GSAG…GIVA, VLLI…FVLG, AILL…GPIN, VTAP…GLAL, VLLG…ADPA, VIPS…ALGV, and FMFI…ATAI.

The protein localises to the cell membrane. Its function is as follows. The phosphoenolpyruvate-dependent sugar phosphotransferase system (sugar PTS), a major carbohydrate active transport system, catalyzes the phosphorylation of incoming sugar substrates concomitantly with their translocation across the cell membrane. The enzyme II PtfABC PTS system is involved in fructose transport. The polypeptide is PTS system fructose-specific EIIC component (Haloferax volcanii (strain ATCC 29605 / DSM 3757 / JCM 8879 / NBRC 14742 / NCIMB 2012 / VKM B-1768 / DS2) (Halobacterium volcanii)).